Consider the following 1393-residue polypeptide: Rab3 GTPase-activating protein non-catalytic subunit (1393 aa).

The segment at 36 to 67 (RDPSKSTDWEDDGWGAWEENEPQEPEEEGNTC) is disordered. Phosphoserine is present on Ser39. Acidic residues predominate over residues 44–64 (WEDDGWGAWEENEPQEPEEEG). A Phosphoserine modification is found at Ser450. A Phosphothreonine modification is found at Thr901. 2 positions are modified to phosphoserine: Ser916 and Ser978.

Belongs to the Rab3-GAP regulatory subunit family. The Rab3 GTPase-activating complex is a heterodimer composed of RAB3GAP1 and RAB3GAP2. The Rab3 GTPase-activating complex interacts with DMXL2. Interacts with LMAN1. In terms of tissue distribution, ubiquitous.

It is found in the cytoplasm. It localises to the endoplasmic reticulum. Functionally, regulatory subunit of the Rab3 GTPase-activating (Rab3GAP) complex composed of RAB3GAP1 and RAB3GAP2, which has GTPase-activating protein (GAP) activity towards various Rab3 subfamily members (RAB3A, RAB3B, RAB3C and RAB3D), RAB5A and RAB43, and guanine nucleotide exchange factor (GEF) activity towards RAB18. As part of the Rab3GAP complex, acts as a GAP for Rab3 proteins by converting active RAB3-GTP to the inactive form RAB3-GDP. Rab3 proteins are involved in regulated exocytosis of neurotransmitters and hormones. The Rab3GAP complex acts as a GEF for RAB18 by promoting the conversion of inactive RAB18-GDP to the active form RAB18-GTP. Recruits and stabilizes RAB18 at the cis-Golgi membrane in human fibroblasts where RAB18 is most likely activated. Also involved in RAB18 recruitment at the endoplasmic reticulum (ER) membrane where it maintains proper ER structure. Required for normal eye and brain development. May participate in neurodevelopmental processes such as proliferation, migration and differentiation before synapse formation, and non-synaptic vesicular release of neurotransmitters. In Homo sapiens (Human), this protein is Rab3 GTPase-activating protein non-catalytic subunit.